The sequence spans 56 residues: MAVQKSKKSRSMRGMRRSHDALTTSAVSVDATSGETHLRHNVTADGYYRGRKVINK.

Positions 1–16 are enriched in basic residues; that stretch reads MAVQKSKKSRSMRGMR. Residues 1-33 form a disordered region; that stretch reads MAVQKSKKSRSMRGMRRSHDALTTSAVSVDATS. Over residues 21 to 33 the composition is skewed to polar residues; the sequence is ALTTSAVSVDATS.

It belongs to the bacterial ribosomal protein bL32 family.

In Aliivibrio fischeri (strain ATCC 700601 / ES114) (Vibrio fischeri), this protein is Large ribosomal subunit protein bL32.